Reading from the N-terminus, the 131-residue chain is D-ribose pyranase (131 aa).

His20 (proton donor) is an active-site residue. Substrate contacts are provided by residues Asp28, His98, and 120-122 (YSN).

It belongs to the RbsD / FucU family. RbsD subfamily. In terms of assembly, homodecamer.

Its subcellular location is the cytoplasm. It carries out the reaction beta-D-ribopyranose = beta-D-ribofuranose. It participates in carbohydrate metabolism; D-ribose degradation; D-ribose 5-phosphate from beta-D-ribopyranose: step 1/2. Functionally, catalyzes the interconversion of beta-pyran and beta-furan forms of D-ribose. The protein is D-ribose pyranase of Limosilactobacillus reuteri (strain DSM 20016) (Lactobacillus reuteri).